Reading from the N-terminus, the 804-residue chain is Endoplasmin (804 aa).

An N-terminal signal peptide occupies residues 1–21; sequence MRALWVLGLCCVLLTFGSVRA. An SRT pseudosubstrate motif motif is present at residues 42 to 44; sequence SRT. Asparagine 62 carries an N-linked (GlcNAc...) asparagine glycan. Serine 64 bears the Phosphoserine mark. N-linked (GlcNAc...) asparagine glycosylation occurs at asparagine 107. ATP contacts are provided by asparagine 107, aspartate 149, and asparagine 162. Lysine 168 is subject to N6-(2-hydroxyisobutyryl)lysine. Serine 172 bears the Phosphoserine mark. Phenylalanine 199 provides a ligand contact to ATP. Asparagine 217 carries an N-linked (GlcNAc...) asparagine glycan. Residues 288–323 form a disordered region; that stretch reads TVEEPMEEEEAAKEEKEESDDEAAVEEEEEEKKPKT. Residues 289 to 317 show a composition bias toward acidic residues; sequence VEEPMEEEEAAKEEKEESDDEAAVEEEEE. Residues serine 306 and serine 403 each carry the phosphoserine modification. The residue at position 404 (lysine 404) is an N6-succinyllysine. A glycan (N-linked (GlcNAc...) asparagine) is linked at asparagine 445. Position 447 is a phosphoserine (serine 447). The residue at position 479 (lysine 479) is an N6-acetyllysine. N-linked (GlcNAc...) asparagine glycosylation is found at asparagine 481 and asparagine 502. Lysine 633 is subject to N6-succinyllysine. The disordered stretch occupies residues 750–804; sequence DPDAKVEEEPEEEPEETTEDTTEDTEQDEDEEMDVGTDEEEQETAKESTAEKDEL. Residues 757-791 are compositionally biased toward acidic residues; the sequence is EEPEEEPEETTEDTTEDTEQDEDEEMDVGTDEEEQ. Residue threonine 786 is modified to Phosphothreonine. A compositionally biased stretch (basic and acidic residues) spans 792–804; that stretch reads ETAKESTAEKDEL. The Prevents secretion from ER motif lies at 801 to 804; it reads KDEL.

Belongs to the heat shock protein 90 family. As to quaternary structure, homodimer; disulfide-linked. Component of an EIF2 complex at least composed of CELF1/CUGBP1, CALR, CALR3, EIF2S1, EIF2S2, HSP90B1 and HSPA5. Part of a large chaperone multiprotein complex comprising DNAJB11, HSP90B1, HSPA5, HYOU, PDIA2, PDIA4, PDIA6, PPIB, SDF2L1, UGGT1 and very small amounts of ERP29, but not, or at very low levels, CALR nor CANX. Interacts with AIMP1; regulates its retention in the endoplasmic reticulum. Hyperglycosylated form interacts with OS9; promoting its degradation by the endoplasmic reticulum associated degradation (ERAD). Interacts with CNPY3. This interaction is disrupted in the presence of ATP. Interacts with TLR4 and TLR9, but not with TLR3. Interacts with MZB1 in a calcium-dependent manner. Interacts with METTL23. Interacts with IL1B; the interaction facilitates cargo translocation into the ERGIC. Interacts with EIF2AK3. In terms of processing, phosphorylated by CK2. Post-translationally, N-glycosylated cotranslationally at Asn-217 by STT3A-containing OST-A complex: this glycosylation is constitutive. In response to various stress, 5 additional facultative sites (Asn-62, Asn-107, Asn-445, Asn-481 and Asn-502) can be glycosylated post-translationally by STT3B-containing OST-B complex, leading to a hyperglycosylated form that is degraded by the ER-associated degradation (ERAD) pathway. In normal conditions, the OST-A complex together with CCDC134 prevent glycosylation at facultative sites during protein folding, thereby preventing hyperglycosylation. Mechanistically, nascent HSP90B1 is tethered during translation to a specialized CCDC134-containing translocon that forms a microenvironment for its folding, in which STT3A associates with the SRT pseudosubstrate motif, and prevents access to facultative glycosylation sites until folding is completed, rendering its facultative sites inaccessible to the OST-B complex.

Its subcellular location is the endoplasmic reticulum lumen. The protein resides in the sarcoplasmic reticulum lumen. It localises to the melanosome. The catalysed reaction is ATP + H2O = ADP + phosphate + H(+). Functionally, ATP-dependent chaperone involved in the processing of proteins in the endoplasmic reticulum, regulating their transport. Together with MESD, acts as a modulator of the Wnt pathway by promoting the folding of LRP6, a coreceptor of the canonical Wnt pathway. When associated with CNPY3, required for proper folding of Toll-like receptors. Promotes folding and trafficking of TLR4 to the cell surface. May participate in the unfolding of cytosolic leaderless cargos (lacking the secretion signal sequence) such as the interleukin 1/IL-1 to facilitate their translocation into the ERGIC (endoplasmic reticulum-Golgi intermediate compartment) and secretion; the translocation process is mediated by the cargo receptor TMED10. This chain is Endoplasmin (HSP90B1), found in Pongo abelii (Sumatran orangutan).